A 304-amino-acid chain; its full sequence is Galactofuranosyltransferase GlfT1 (304 aa).

This sequence belongs to the glycosyltransferase 2 family. Is probably part of an AG biosynthetic complex.

The protein localises to the cell membrane. Its subcellular location is the secreted. The protein resides in the cell wall. The enzyme catalyses alpha-L-rhamnosyl-(1-&gt;3)-N-acetyl-alpha-D-glucosaminyl-diphospho-trans,octa-cis-decaprenol + 2 UDP-alpha-D-galactofuranose = beta-D-galactofuranosyl-(1-&gt;5)-beta-D-galactofuranosyl-(1-&gt;4)-alpha-L-rhamnosyl-(1-&gt;3)-N-acetyl-alpha-D-glucosaminyl-diphospho-trans,octa-cis-decaprenol + 2 UDP + 2 H(+). It functions in the pathway cell wall biogenesis; cell wall polysaccharide biosynthesis. Its function is as follows. Involved in the biosynthesis of the arabinogalactan (AG) region of the mycolylarabinogalactan-peptidoglycan (mAGP) complex, an essential component of the mycobacterial cell wall. Catalyzes the transfer of the first two galactofuranosyl (Galf) units from UDP-galactofuranose (UDP-Galf) onto the rhamnosyl-GlcNAc-diphospho-decaprenol (Rha-GlcNAc-PP-C50) acceptor, yielding galactofuranosyl-galactofuranosyl-rhamnosyl-GlcNAc-diphospho-decaprenol (Galf-Galf-Rha-GlcNAc-PP-C50). Thus, GlfT1 is the initiator of galactan synthesis, while GlfT2 continues with the subsequent polymerization events. The polypeptide is Galactofuranosyltransferase GlfT1 (Mycobacterium tuberculosis (strain CDC 1551 / Oshkosh)).